Reading from the N-terminus, the 160-residue chain is Transcriptional regulator MraZ (160 aa).

SpoVT-AbrB domains follow at residues 5 to 51 (TFEK…GKAL) and 80 to 123 (MAKL…EREA).

This sequence belongs to the MraZ family. As to quaternary structure, forms oligomers.

It localises to the cytoplasm. Its subcellular location is the nucleoid. In Phenylobacterium zucineum (strain HLK1), this protein is Transcriptional regulator MraZ.